We begin with the raw amino-acid sequence, 1074 residues long: Phospholipase D1 (1074 aa).

A PX domain is found at 81–212 (IKAQVLEVER…TEFLDVSQLS (132 aa)). The region spanning 219–328 (PKGLEGMIMK…WGGAIEEFIR (110 aa)) is the PH domain. S-palmitoyl cysteine attachment occurs at residues Cys-240 and Cys-241. The PLD phosphodiesterase 1 domain occupies 459-486 (YLWAHHEKLVIIDQSVAFVGGIDLAYGR). The interval 463 to 928 (HHEKLVIIDQ…MLGKRDSEMA (466 aa)) is catalytic. Residues Ser-499, Ser-561, and Ser-629 each carry the phosphoserine modification. The PLD phosphodiesterase 2 domain maps to 891–918 (ELIYVHSKLLIADDNTVIIGSANINDRS).

The protein belongs to the phospholipase D family. In terms of assembly, interacts with PIP5K1B. In terms of tissue distribution, expressed in kidney, lung, and at a much lower levels, in brain, liver, heart, testis and spleen.

It is found in the cytoplasm. The protein resides in the perinuclear region. It localises to the endoplasmic reticulum membrane. Its subcellular location is the golgi apparatus membrane. The protein localises to the late endosome membrane. The catalysed reaction is a 1,2-diacyl-sn-glycero-3-phosphocholine + H2O = a 1,2-diacyl-sn-glycero-3-phosphate + choline + H(+). It carries out the reaction ethanol + a 1,2-diacyl-sn-glycero-3-phosphocholine = 1,2-diacyl-sn-glycero-3-phosphoethanol + choline. The enzyme catalyses 1,2-dihexadecanoyl-sn-glycero-3-phosphocholine + H2O = 1,2-dihexadecanoyl-sn-glycero-3-phosphate + choline + H(+). Its activity is regulated as follows. Stimulated by phosphatidylinositol 4,5-bisphosphate and phosphatidylinositol 3,4,5-trisphosphate, activated by the phosphokinase C-alpha, by the ADP-ribosylation factor-1 (ARF-1), and to a lesser extent by GTP-binding proteins: RHO A, RAC-1 and CDC42. Inhibited by oleate. Function as phospholipase selectivefor phosphatidylcholine. Implicated as a critical step in numerous cellular pathways, including signal transduction, membrane trafficking, and the regulation of mitosis. May be involved in the regulation of perinuclear intravesicular membrane traffic. The chain is Phospholipase D1 from Mus musculus (Mouse).